The primary structure comprises 207 residues: Thiamine-phosphate synthase (207 aa).

Residues 37–41 and N69 each bind 4-amino-2-methyl-5-(diphosphooxymethyl)pyrimidine; that span reads QYRDK. Positions 70 and 89 each coordinate Mg(2+). Position 108 (S108) interacts with 4-amino-2-methyl-5-(diphosphooxymethyl)pyrimidine. 135–137 contacts 2-[(2R,5Z)-2-carboxy-4-methylthiazol-5(2H)-ylidene]ethyl phosphate; that stretch reads SRT. Residue K138 coordinates 4-amino-2-methyl-5-(diphosphooxymethyl)pyrimidine. G164 serves as a coordination point for 2-[(2R,5Z)-2-carboxy-4-methylthiazol-5(2H)-ylidene]ethyl phosphate.

It belongs to the thiamine-phosphate synthase family. Mg(2+) serves as cofactor.

The enzyme catalyses 2-[(2R,5Z)-2-carboxy-4-methylthiazol-5(2H)-ylidene]ethyl phosphate + 4-amino-2-methyl-5-(diphosphooxymethyl)pyrimidine + 2 H(+) = thiamine phosphate + CO2 + diphosphate. The catalysed reaction is 2-(2-carboxy-4-methylthiazol-5-yl)ethyl phosphate + 4-amino-2-methyl-5-(diphosphooxymethyl)pyrimidine + 2 H(+) = thiamine phosphate + CO2 + diphosphate. It catalyses the reaction 4-methyl-5-(2-phosphooxyethyl)-thiazole + 4-amino-2-methyl-5-(diphosphooxymethyl)pyrimidine + H(+) = thiamine phosphate + diphosphate. Its pathway is cofactor biosynthesis; thiamine diphosphate biosynthesis; thiamine phosphate from 4-amino-2-methyl-5-diphosphomethylpyrimidine and 4-methyl-5-(2-phosphoethyl)-thiazole: step 1/1. In terms of biological role, condenses 4-methyl-5-(beta-hydroxyethyl)thiazole monophosphate (THZ-P) and 2-methyl-4-amino-5-hydroxymethyl pyrimidine pyrophosphate (HMP-PP) to form thiamine monophosphate (TMP). The sequence is that of Thiamine-phosphate synthase from Chromobacterium violaceum (strain ATCC 12472 / DSM 30191 / JCM 1249 / CCUG 213 / NBRC 12614 / NCIMB 9131 / NCTC 9757 / MK).